A 510-amino-acid polypeptide reads, in one-letter code: MKLKPIEVAEILQKEIANINCLSELEEVGQVISVGDGIAKIYGLANVKSGEVVEFKSGVKGLVLNLENDSVGAVIMGDDNQVQQGDNVKRTKEVLEVPIGKALLGRVVDALGNPIDGKGDIASKEYRHIEMKAPGIIERTSVSEPVQTGIKAIDSLIPIGRGQRELIIGDRQTGKTAIAVDTIINQKQAHSLTNESDKIYCIYVAIGQKRSSVAQIVKKLEDAGAMDYTIVVSATASEAAALQFIAPYSACSMGEYFRDNGMHALIIYDDLSKHAVAYRQISLLLRRPPGREAYPGDVFYLHSRLLERAAKMSEEKGSGSLTALPIIETQAGDVSAYIPTNVISITDGQIFLESELFYKGVRPAVNVGISVSRVGSAAQIKAMKQVAGSVKLELAQFRELESFSQFGSDLDPATKAQIDHGKRLVEILKQAQYHPFPVEEQIVSIYVGTKKYLNDVPLQKVKEFEDKMLTEIRLNKKDILESIKNEQRITEETEQKLKAFLENFVKEFVK.

169 to 176 (GDRQTGKT) serves as a coordination point for ATP.

The protein belongs to the ATPase alpha/beta chains family. F-type ATPases have 2 components, CF(1) - the catalytic core - and CF(0) - the membrane proton channel. CF(1) has five subunits: alpha(3), beta(3), gamma(1), delta(1), epsilon(1). CF(0) has three main subunits: a(1), b(2) and c(9-12). The alpha and beta chains form an alternating ring which encloses part of the gamma chain. CF(1) is attached to CF(0) by a central stalk formed by the gamma and epsilon chains, while a peripheral stalk is formed by the delta and b chains.

The protein resides in the cell inner membrane. The catalysed reaction is ATP + H2O + 4 H(+)(in) = ADP + phosphate + 5 H(+)(out). In terms of biological role, produces ATP from ADP in the presence of a proton gradient across the membrane. The alpha chain is a regulatory subunit. The chain is ATP synthase subunit alpha from Rickettsia felis (strain ATCC VR-1525 / URRWXCal2) (Rickettsia azadi).